A 478-amino-acid polypeptide reads, in one-letter code: Cytochrome c-552 (478 aa).

The N-terminal stretch at 1–26 (MARKTLRARRFFSLIFPFFFITSVYA) is a signal peptide. Residue histidine 94 participates in heme c binding. Residues cysteine 122, cysteine 125, and lysine 126 each coordinate heme. Residues cysteine 160, cysteine 163, histidine 164, cysteine 209, cysteine 212, and histidine 213 each contribute to the heme c site. Ca(2+) contacts are provided by glutamate 215, tyrosine 216, lysine 261, and glutamine 263. Residue tyrosine 216 participates in substrate binding. Histidine 264 is a substrate binding site. The heme c site is built by histidine 275, cysteine 282, cysteine 285, histidine 286, histidine 301, cysteine 314, cysteine 317, histidine 318, and histidine 393.

The protein belongs to the cytochrome c-552 family. The cofactor is Ca(2+). Heme c serves as cofactor.

It is found in the periplasm. It catalyses the reaction 6 Fe(III)-[cytochrome c] + NH4(+) + 2 H2O = 6 Fe(II)-[cytochrome c] + nitrite + 8 H(+). It functions in the pathway nitrogen metabolism; nitrate reduction (assimilation). Catalyzes the reduction of nitrite to ammonia, consuming six electrons in the process. The chain is Cytochrome c-552 from Salmonella gallinarum (strain 287/91 / NCTC 13346).